The primary structure comprises 298 residues: ATP phosphoribosyltransferase (298 aa).

Belongs to the ATP phosphoribosyltransferase family. Long subfamily. It depends on Mg(2+) as a cofactor.

Its subcellular location is the cytoplasm. The enzyme catalyses 1-(5-phospho-beta-D-ribosyl)-ATP + diphosphate = 5-phospho-alpha-D-ribose 1-diphosphate + ATP. It participates in amino-acid biosynthesis; L-histidine biosynthesis; L-histidine from 5-phospho-alpha-D-ribose 1-diphosphate: step 1/9. Feedback inhibited by histidine. In terms of biological role, catalyzes the condensation of ATP and 5-phosphoribose 1-diphosphate to form N'-(5'-phosphoribosyl)-ATP (PR-ATP). Has a crucial role in the pathway because the rate of histidine biosynthesis seems to be controlled primarily by regulation of HisG enzymatic activity. This is ATP phosphoribosyltransferase from Aeromonas salmonicida (strain A449).